The primary structure comprises 273 residues: NADPH-dependent 7-cyano-7-deazaguanine reductase (273 aa).

Substrate is bound at residue 81–83 (VES). 83-84 (SK) contacts NADPH. The active-site Thioimide intermediate is Cys-179. Catalysis depends on Asp-186, which acts as the Proton donor. Residue 218–219 (AE) coordinates substrate. 247 to 248 (RG) contacts NADPH.

The protein belongs to the GTP cyclohydrolase I family. QueF type 2 subfamily. In terms of assembly, homodimer.

It localises to the cytoplasm. It carries out the reaction 7-aminomethyl-7-carbaguanine + 2 NADP(+) = 7-cyano-7-deazaguanine + 2 NADPH + 3 H(+). It participates in tRNA modification; tRNA-queuosine biosynthesis. Functionally, catalyzes the NADPH-dependent reduction of 7-cyano-7-deazaguanine (preQ0) to 7-aminomethyl-7-deazaguanine (preQ1). The sequence is that of NADPH-dependent 7-cyano-7-deazaguanine reductase from Rickettsia felis (strain ATCC VR-1525 / URRWXCal2) (Rickettsia azadi).